Consider the following 426-residue polypeptide: Tyrosine-protein phosphatase non-receptor type 20 (426 aa).

Positions 1–10 (MSSPRKVRGK) are enriched in basic residues. A disordered region spans residues 1–58 (MSSPRKVRGKTGRDNDEEEGNSGNLNLRNSLPSSSQKMTPTKPIFGNKMNSENVKPSH). Low complexity predominate over residues 21 to 35 (NSGNLNLRNSLPSSS). Ser-76 carries the phosphoserine modification. The span at 95 to 117 (NSMDSETAGPSKTVSPVLSGSSR) shows a compositional bias: polar residues. The segment at 95–124 (NSMDSETAGPSKTVSPVLSGSSRLSKDTET) is disordered. At Ser-127 the chain carries Phosphoserine. Positions 165 to 418 (IIREFLELEQ…QFCYEIVLEV (254 aa)) constitute a Tyrosine-protein phosphatase domain. Residues Asp-329, 359–365 (CSAGVGR), and Gln-403 each bind substrate. The active-site Phosphocysteine intermediate is the Cys-359.

Belongs to the protein-tyrosine phosphatase family. Non-receptor class subfamily. In terms of tissue distribution, testis-specific. Specifically expressed in testicular germ cells that undergo meiosis (at protein level).

It is found in the nucleus. The protein localises to the cytoplasm. It localises to the cytoskeleton. Its subcellular location is the microtubule organizing center. The protein resides in the centrosome. It catalyses the reaction O-phospho-L-tyrosyl-[protein] + H2O = L-tyrosyl-[protein] + phosphate. Its function is as follows. Tyrosine-protein phosphatase targeted to sites of actin polymerization in response of varied extracellular stimuli. Has tyrosine phosphatase activity towards various tyrosyl phosphorylated substrates. This is Tyrosine-protein phosphatase non-receptor type 20 (Ptpn20) from Mus musculus (Mouse).